A 564-amino-acid chain; its full sequence is NADPH oxidase 1 (564 aa).

The Cytoplasmic segment spans residues 1-9; that stretch reads MGNWVVNHW. A helical transmembrane segment spans residues 10 to 30; sequence FSVLFLVVWLGLNVFLFVDAF. At 31–44 the chain is on the extracellular side; that stretch reads LKYEKADKYYYTRK. A helical transmembrane segment spans residues 45-72; it reads ILGSTLACARASALCLNFNSTLILLPVC. The region spanning 54–283 is the Ferric oxidoreductase domain; sequence RASALCLNFN…LAPVILYICE (230 aa). Over 73–102 the chain is Cytoplasmic; sequence RNLLSFLRGTCSFCSRTLRKQLDHNLTFHK. Residues histidine 101 and histidine 115 each contribute to the heme site. The chain crosses the membrane as a helical span at residues 103-123; it reads LVAYMICLHTAIHIIAHLFNF. The Extracellular portion of the chain corresponds to 124-168; the sequence is DCYSRSRQATDGSLASILSSLSHDEKKGGSWLNPIQSRNTTVEYV. An N-linked (GlcNAc...) asparagine glycan is attached at asparagine 162. A helical transmembrane segment spans residues 169-189; sequence TFTSIAGLTGVIMTIALILMV. At 190-206 the chain is on the cytoplasmic side; it reads TSATEFIRRSYFEVFWY. A helical transmembrane segment spans residues 207 to 227; it reads THHLFIFYILGLGIHGIGGIV. The heme site is built by histidine 209 and histidine 221. Residues 228-396 are Extracellular-facing; that stretch reads RGQTEESMNE…TASEDVFQYE (169 aa). An N-linked (GlcNAc...) asparagine glycan is attached at asparagine 236. One can recognise an FAD-binding FR-type domain in the interval 284–391; the sequence is RILRFYRSQQ…DGPFGTASED (108 aa). 338–344 contacts FAD; sequence HPFTLTS. The chain crosses the membrane as a helical span at residues 397 to 417; the sequence is VAVLVGAGIGVTPFASILKSI. Residues 397-536 are interaction with NOXO1; it reads VAVLVGAGIG…GVFLCGPRTL (140 aa). Residues 418-564 are Cytoplasmic-facing; sequence WYKFQCADHN…VQFYFNKENF (147 aa). At threonine 430 the chain carries Phosphothreonine.

In terms of assembly, NOX1, NOXA1, NOXO1, RAC1 and CYBA forms a functional multimeric complex supporting reactive oxygen species (ROS) production. Interacts with NOXO1. Interacts (via FAD-binding FR-type domain) with ARHGEF7 (via PH domain). The phosphorylated form at Thr-430 interacts with NOXA1 with greater affinity. Requires FAD as cofactor. Phosphorylation at Thr-430 mediated by PKC/PRKBC positively regulates its interaction with NOXA1 and enzyme activity. As to expression, detected in colon, uterus, prostate, and colon carcinoma, but not in peripheral blood leukocytes.

Its subcellular location is the cell projection. The protein localises to the invadopodium membrane. It is found in the cell membrane. It catalyses the reaction NADPH + 2 O2 = 2 superoxide + NADP(+) + H(+). With respect to regulation, the oxidase activity is potentiated by NOXA1, NOXO1 and RAC1. In terms of biological role, NADPH oxidase that catalyzes the generation of superoxide from molecular oxygen utilizing NADPH as an electron donor. This is NADPH oxidase 1 from Homo sapiens (Human).